The chain runs to 160 residues: Transcription antitermination protein NusB (160 aa).

It belongs to the NusB family.

Involved in transcription antitermination. Required for transcription of ribosomal RNA (rRNA) genes. Binds specifically to the boxA antiterminator sequence of the ribosomal RNA (rrn) operons. In Salinibacter ruber (strain DSM 13855 / M31), this protein is Transcription antitermination protein NusB.